A 584-amino-acid chain; its full sequence is 2-succinyl-5-enolpyruvyl-6-hydroxy-3-cyclohexene-1-carboxylate synthase (584 aa).

It belongs to the TPP enzyme family. MenD subfamily. Homodimer. It depends on Mg(2+) as a cofactor. The cofactor is Mn(2+). Requires thiamine diphosphate as cofactor.

It carries out the reaction isochorismate + 2-oxoglutarate + H(+) = 5-enolpyruvoyl-6-hydroxy-2-succinyl-cyclohex-3-ene-1-carboxylate + CO2. Its pathway is quinol/quinone metabolism; 1,4-dihydroxy-2-naphthoate biosynthesis; 1,4-dihydroxy-2-naphthoate from chorismate: step 2/7. It participates in quinol/quinone metabolism; menaquinone biosynthesis. Functionally, catalyzes the thiamine diphosphate-dependent decarboxylation of 2-oxoglutarate and the subsequent addition of the resulting succinic semialdehyde-thiamine pyrophosphate anion to isochorismate to yield 2-succinyl-5-enolpyruvyl-6-hydroxy-3-cyclohexene-1-carboxylate (SEPHCHC). This Bacillus cytotoxicus (strain DSM 22905 / CIP 110041 / 391-98 / NVH 391-98) protein is 2-succinyl-5-enolpyruvyl-6-hydroxy-3-cyclohexene-1-carboxylate synthase.